Reading from the N-terminus, the 513-residue chain is GMP synthase [glutamine-hydrolyzing] (513 aa).

A Glutamine amidotransferase type-1 domain is found at 3–200; the sequence is SVLVLDFGSQ…LIDIAGITPD (198 aa). The active-site Nucleophile is the Cys80. Residues His174 and Glu176 contribute to the active site. Residues 201-388 form the GMPS ATP-PPase domain; it reads WSPKHFIDHQ…LGIAEDILMR (188 aa). ATP is bound at residue 228–234; it reads SGGVDSS.

Homodimer.

The enzyme catalyses XMP + L-glutamine + ATP + H2O = GMP + L-glutamate + AMP + diphosphate + 2 H(+). The protein operates within purine metabolism; GMP biosynthesis; GMP from XMP (L-Gln route): step 1/1. Its function is as follows. Catalyzes the synthesis of GMP from XMP. The sequence is that of GMP synthase [glutamine-hydrolyzing] from Chlorobium limicola (strain DSM 245 / NBRC 103803 / 6330).